Reading from the N-terminus, the 414-residue chain is TAR DNA-binding protein 43 (414 aa).

RRM domains lie at 104-200 and 191-262; these read SDLI…RCTE and RKVF…NAEP. Positions 261-274 are enriched in basic and acidic residues; that stretch reads EPKHNSNRQLERGG. Disordered regions lie at residues 261-303 and 341-373; these read EPKH…GNNQ and ASQQ…GNNS. The segment covering 275 to 303 has biased composition (gly residues); sequence RFGGNPGGFGNQGGFGNSRGGGGGLGNNQ. Over residues 342-373 the composition is skewed to low complexity; the sequence is SQQNQSGPSGNNQPQGNMQREQNQGFSSGNNS.

As to quaternary structure, homodimer.

The protein resides in the nucleus. Its subcellular location is the cytoplasm. The protein localises to the stress granule. It localises to the mitochondrion. Probably involved in transcriptional repression. May play a role in the maintenance of the circadian clock periodicity. The chain is TAR DNA-binding protein 43 (TARDBP) from Gallus gallus (Chicken).